A 199-amino-acid polypeptide reads, in one-letter code: Probable NADH dehydrogenase [ubiquinone] iron-sulfur protein 7, mitochondrial (199 aa).

Cysteine 74, cysteine 75, cysteine 139, and cysteine 169 together coordinate [4Fe-4S] cluster.

It belongs to the complex I 20 kDa subunit family. As to quaternary structure, complex I is composed of 45 different subunits This is a component of the iron-sulfur (IP) fragment of the enzyme. [4Fe-4S] cluster serves as cofactor.

It localises to the mitochondrion. The catalysed reaction is a ubiquinone + NADH + 5 H(+)(in) = a ubiquinol + NAD(+) + 4 H(+)(out). Functionally, core subunit of the mitochondrial membrane respiratory chain NADH dehydrogenase (Complex I) that is believed to belong to the minimal assembly required for catalysis. Complex I functions in the transfer of electrons from NADH to the respiratory chain. The immediate electron acceptor for the enzyme is believed to be ubiquinone. This chain is Probable NADH dehydrogenase [ubiquinone] iron-sulfur protein 7, mitochondrial (nduf-7), found in Caenorhabditis elegans.